The following is a 240-amino-acid chain: uncharacterized protein (240 aa).

The C2H2-type zinc-finger motif lies at L3–H27. Disordered regions lie at residues H21–E43 and A120–I171. Residues A120–K136 show a composition bias toward basic and acidic residues. Low complexity predominate over residues S155 to S166.

This is an uncharacterized protein from Schizosaccharomyces pombe (strain 972 / ATCC 24843) (Fission yeast).